The chain runs to 181 residues: Probable cobalt-precorrin-6B C(15)-methyltransferase (decarboxylating) (181 aa).

S-adenosyl-L-methionine contacts are provided by residues Thr-16, 40-44, Asp-61, and Ala-89; that span reads GCGSG.

The protein belongs to the methyltransferase superfamily. Archaeal-type CbiT family.

It carries out the reaction Co-precorrin-6B + S-adenosyl-L-methionine = Co-precorrin-7 + S-adenosyl-L-homocysteine + CO2. It participates in cofactor biosynthesis; adenosylcobalamin biosynthesis; cob(II)yrinate a,c-diamide from sirohydrochlorin (anaerobic route): step 8/10. In terms of biological role, catalyzes the methylation of C-15 in cobalt-precorrin-6B followed by the decarboxylation of C-12 to form cobalt-precorrin-7. This is Probable cobalt-precorrin-6B C(15)-methyltransferase (decarboxylating) from Methanococcus maripaludis (strain C5 / ATCC BAA-1333).